Reading from the N-terminus, the 254-residue chain is MKFIVIKIGGSTLSDMHPSIINNIKHLRSNNIYPIIVHGGGPFINEALSNQQIEPHFVNGLRVTDKATMTITKHTLIADVNTALVAQFNQHQCSAIGLCGLDAQLFEITSFDQQYGYVGVPTALNKDALQYLCTKFVPIINSIGFNNHDGEFYNINADTLAYFIASSLKAPIYVLSNIAGVLINDVVIPQLPLVDIHQYIEHGDIYGGMIPKVLDAKNAIENGCPKVIIASGNKPNIIESIYNNDFVGTTILNS.

Substrate is bound by residues 40 to 41, arginine 62, and asparagine 154; that span reads GG.

It belongs to the acetylglutamate kinase family. ArgB subfamily.

The protein resides in the cytoplasm. The catalysed reaction is N-acetyl-L-glutamate + ATP = N-acetyl-L-glutamyl 5-phosphate + ADP. It participates in amino-acid biosynthesis; L-arginine biosynthesis; N(2)-acetyl-L-ornithine from L-glutamate: step 2/4. In terms of biological role, catalyzes the ATP-dependent phosphorylation of N-acetyl-L-glutamate. This is Acetylglutamate kinase from Staphylococcus aureus (strain Mu3 / ATCC 700698).